A 443-amino-acid chain; its full sequence is 2-hydroxyethylphosphonate dioxygenase (443 aa).

The HTH cro/C1-type 1 domain occupies Leu8 to Leu63. A substrate-binding site is contributed by Lys16. The segment at residues Ala19–Gly38 is a DNA-binding region (H-T-H motif). Residues Tyr98 and Asn126 each coordinate substrate. Residue His129 participates in Fe cation binding. Positions 176, 182, and 196 each coordinate substrate. His182 contributes to the Fe cation binding site. An HTH cro/C1-type 2 domain is found at Val234–Leu290. The H-T-H motif DNA-binding region spans Thr245–Arg265.

Belongs to the non-heme iron-dependent dioxygenase family. As to quaternary structure, homodimer. The cofactor is Fe(2+).

It carries out the reaction 2-hydroxyethylphosphonate + O2 = hydroxymethylphosphonate + formate + H(+). Its pathway is secondary metabolite biosynthesis; bialaphos biosynthesis. Functionally, non-heme-dependent dioxygenase that catalyzes the conversion of 2-hydroxyethylphosphonate (HEP) to hydroxymethylphosphonate (HMP) in the biosynthesis of phosphinothricin tripeptide (PTT), also known as bialaphos (BA), a natural-product antibiotic and potent herbicide. PTT contains the unusual amino acid phosphinothricin attached to 2 alanine residues. Synthetic phosphinothricin (glufosinate) is a key component of commercial herbicides. The sequence is that of 2-hydroxyethylphosphonate dioxygenase (hepD) from Streptomyces viridochromogenes (strain DSM 40736 / JCM 4977 / BCRC 1201 / Tue 494).